A 303-amino-acid polypeptide reads, in one-letter code: Probable cell division protein WhiA (303 aa).

The segment at residues 272–303 (SIQQLADSLSKPLTKSGVNHRLRKINKIADEL) is a DNA-binding region (H-T-H motif).

It belongs to the WhiA family.

Functionally, involved in cell division and chromosome segregation. This chain is Probable cell division protein WhiA, found in Streptococcus gordonii (strain Challis / ATCC 35105 / BCRC 15272 / CH1 / DL1 / V288).